A 415-amino-acid polypeptide reads, in one-letter code: Amylovoran biosynthesis protein AmsJ (415 aa).

This sequence belongs to the polysaccharide pyruvyl transferase family.

It participates in glycan metabolism; exopolysaccharide biosynthesis. Its function is as follows. Involved in the biosynthesis of amylovoran which functions as a virulence factor. The sequence is that of Amylovoran biosynthesis protein AmsJ (amsJ) from Erwinia amylovora (Fire blight bacteria).